A 124-amino-acid chain; its full sequence is Large ribosomal subunit protein bL20c (124 aa).

Belongs to the bacterial ribosomal protein bL20 family.

The protein resides in the plastid. It localises to the chloroplast. Functionally, binds directly to 23S ribosomal RNA and is necessary for the in vitro assembly process of the 50S ribosomal subunit. It is not involved in the protein synthesizing functions of that subunit. The polypeptide is Large ribosomal subunit protein bL20c (Stigeoclonium helveticum (Green alga)).